The primary structure comprises 414 residues: Serine hydroxymethyltransferase (414 aa).

(6S)-5,6,7,8-tetrahydrofolate-binding positions include Leu121 and 125 to 127; that span reads GHL. N6-(pyridoxal phosphate)lysine is present on Lys229.

This sequence belongs to the SHMT family. In terms of assembly, homodimer. Pyridoxal 5'-phosphate is required as a cofactor.

It localises to the cytoplasm. The enzyme catalyses (6R)-5,10-methylene-5,6,7,8-tetrahydrofolate + glycine + H2O = (6S)-5,6,7,8-tetrahydrofolate + L-serine. It participates in one-carbon metabolism; tetrahydrofolate interconversion. Its pathway is amino-acid biosynthesis; glycine biosynthesis; glycine from L-serine: step 1/1. Its function is as follows. Catalyzes the reversible interconversion of serine and glycine with tetrahydrofolate (THF) serving as the one-carbon carrier. This reaction serves as the major source of one-carbon groups required for the biosynthesis of purines, thymidylate, methionine, and other important biomolecules. Also exhibits THF-independent aldolase activity toward beta-hydroxyamino acids, producing glycine and aldehydes, via a retro-aldol mechanism. This Variovorax paradoxus (strain S110) protein is Serine hydroxymethyltransferase.